We begin with the raw amino-acid sequence, 996 residues long: RNA2 polyprotein (996 aa).

An involved in tubule formation by the movement protein region spans residues 363-369 (LRYTIGG). Positions 368–398 (GGSKPKNKLADKAHNEEAETSDSKGIIDPKD) are disordered. Over residues 375–398 (KLADKAHNEEAETSDSKGIIDPKD) the composition is skewed to basic and acidic residues.

As to quaternary structure, interacts with the large capsid protein. In terms of assembly, interacts with the small capsid protein. Homomultimer; assembles as pentons. Interacts with the movement protein (via C-terminus). Interacts (via C-terminus) with the large capsid protein. In terms of processing, specific enzymatic cleavages by picornain 3C-like protease in vivo yield mature proteins.

It is found in the host cell junction. Its subcellular location is the host plasmodesma. It localises to the virion. In terms of biological role, responsible for viral RNA2 accumulation. May function by recruiting the RNA1-encoded polyprotein that contains the replication protein to RNA2 and enable its replication. Transports the viral genome to neighboring plant cells directly through plasmosdesmata, without any budding. The movement protein allows efficient cell to cell propagation, by bypassing the host cell wall barrier. Acts by forming a tubular structure at the host plasmodesmata, enlarging it enough to allow free passage of virion capsids. Binds to GTP and to single-stranded RNA and single-stranded DNA in a non-sequence-specific manner. Its function is as follows. Together with the mature small capsid protein, forms an icosahedral capsid (T=3) enclosing the viral positive strand RNA genome, with a diameter of approximately 300 Angstroms. The capsid is formed from 60 copies each of the large and the mature small capsid protein. The large capsid protein interacts with the viral RNA. Functionally, together with the large capsid protein, forms an icosahedral capsid (T=3) enclosing the viral positive strand RNA genome, with a diameter of approximately 300 Angstroms. The capsid is formed from 60 copies each of the large and the mature small capsid protein. The mature small capsid protein forms the turrets at the fivefold axes of the viral particle. This is RNA2 polyprotein from Red clover mottle virus (RCMV).